The primary structure comprises 537 residues: Methylmalonate-semialdehyde/malonate-semialdehyde dehydrogenase [acylating], mitochondrial (537 aa).

The transit peptide at 1-34 directs the protein to the mitochondrion; it reads MAAVAVAAAAAALRARILQVSSKVNSSWQPASSF. An N6-acetyllysine; alternate mark is found at Lys49, Lys54, Lys57, and Lys78. 4 positions are modified to N6-succinyllysine; alternate: Lys49, Lys54, Lys57, and Lys78. Lys89 is modified (N6-acetyllysine). 2 positions are modified to N6-acetyllysine; alternate: Lys119 and Lys131. N6-succinyllysine; alternate is present on residues Lys119 and Lys131. 6 residues coordinate NAD(+): Ala185, Phe187, Lys211, Glu214, Arg215, and Ser264. Position 264 is a phosphoserine (Ser264). N6-acetyllysine is present on Lys300. The active-site Nucleophile is Cys319. An N6-acetyllysine mark is found at Lys332 and Lys333. An N6-acetyllysine; alternate mark is found at Lys366 and Lys378. N6-succinyllysine; alternate occurs at positions 366 and 378. Ser382 carries the phosphoserine modification. The residue at position 393 (Lys393) is an N6-succinyllysine. Residue Glu419 participates in NAD(+) binding. Lys502 carries the N6-acetyllysine modification. Lys519 is subject to N6-succinyllysine.

This sequence belongs to the aldehyde dehydrogenase family. As to quaternary structure, homodimer. The N-terminus is blocked.

Its subcellular location is the mitochondrion. The enzyme catalyses 2-methyl-3-oxopropanoate + NAD(+) + CoA + H2O = propanoyl-CoA + hydrogencarbonate + NADH + H(+). It carries out the reaction 3-oxopropanoate + NAD(+) + CoA + H2O = hydrogencarbonate + acetyl-CoA + NADH + H(+). The catalysed reaction is (R)-2-methyl-3-oxopropanoate + NAD(+) + CoA + H2O = propanoyl-CoA + hydrogencarbonate + NADH + H(+). It catalyses the reaction (S)-2-methyl-3-oxopropanoate + NAD(+) + CoA + H2O = propanoyl-CoA + hydrogencarbonate + NADH + H(+). Malonate and methylmalonate semialdehyde dehydrogenase involved in the catabolism of valine, thymine, and compounds catabolized by way of beta-alanine, including uracil and cytidine. This chain is Methylmalonate-semialdehyde/malonate-semialdehyde dehydrogenase [acylating], mitochondrial (ALDH6A1), found in Bos taurus (Bovine).